The following is a 54-amino-acid chain: Ovomucoid (54 aa).

In terms of domain architecture, Kazal-like spans valine 4–cysteine 54. Cystine bridges form between cysteine 6–cysteine 36, cysteine 14–cysteine 33, and cysteine 22–cysteine 54. The N-linked (GlcNAc...) asparagine glycan is linked to asparagine 43.

The protein resides in the secreted. The polypeptide is Ovomucoid (Caracara plancus (Southern caracara)).